Here is a 1805-residue protein sequence, read N- to C-terminus: Probable serine/threonine-protein kinase MEC1 homolog (1805 aa).

The interval 406–425 is disordered; the sequence is STEENTKNEGGSGAVENPGR. One can recognise an FAT domain in the interval 928–1420; sequence QILRISFFLK…FWRSLIMMNS (493 aa). In terms of domain architecture, PI3K/PI4K catalytic spans 1494–1793; it reads VRNEVKVFNS…LNEEATNDEN (300 aa). Residues 1500 to 1506 are G-loop; it reads VFNSLQR. The segment at 1660-1668 is catalytic loop; it reads GLGDRHAEN. Positions 1680 to 1704 are activation loop; that stretch reads HVDLNCIFGKGKELQVPERVPYRLT. In terms of domain architecture, FATC spans 1773–1805; the sequence is DDLDACSKCDVLNEEATNDENLCMMYIGWLPFI.

The protein belongs to the PI3/PI4-kinase family. ATM subfamily.

Its subcellular location is the nucleus. It carries out the reaction L-seryl-[protein] + ATP = O-phospho-L-seryl-[protein] + ADP + H(+). The enzyme catalyses L-threonyl-[protein] + ATP = O-phospho-L-threonyl-[protein] + ADP + H(+). Its function is as follows. Serine/threonine protein kinase which activates checkpoint signaling upon genotoxic stresses such as ionizing radiation (IR), ultraviolet light (UV), or DNA replication stalling, thereby acting as a DNA damage sensor. Recognizes the substrate consensus sequence [ST]-Q. Recruited to DNA lesions in order to initiate the DNA repair by homologous recombination. Phosphorylates histone H2A to form H2AS128ph (gamma-H2A) at sites of DNA damage, also involved in the regulation of DNA damage response mechanism. Required for cell growth and meiotic recombination. In Encephalitozoon cuniculi (strain GB-M1) (Microsporidian parasite), this protein is Probable serine/threonine-protein kinase MEC1 homolog (MEC1).